A 511-amino-acid chain; its full sequence is MNTLQLIFLLFFFPTLLFLYCLPYKRNQNHRRLPPSPPSFPIIGHLHHLGPLIHQSFHALSTRYGSLIHLRLGSVPCVVVSTPDLAKDFLKTNELAFSSRKHSLAIDHITYGVAFAFAPYGTYWKFIKKLFTVELLGTQNLSHFLPIRTHEIRELLRTLMVKSRAKERVNLTEELLKLTNNVISQMMMSIRCSGTNSEADEAKNLVREVTKIFGQFNVSDFIWFCKNIDLQGFKKRYEGTHRRYDALLERIIMGREENRRRGKIKDGEGKDFLDMLLDVLEDGKAEIKITRDHIKALILDFLTAGTDTTAIAIEWALVELINNPNALEKARQEIDQVIGDERLVQESDTPNLPYIQAIIKEALRLHPPIPMLIRKSTENVIVQGYDIPAGTLLFVNIWSIGRNPQCWETPLEFKPHRFLDGGDLKSSLDIKGHNFQLLPFGTGRRGCPGVNLAMRELSVVIANLIQCFDWDVVGERLLNTDERAGLTAPRAVDFVCVPLERGNTLKILGSN.

A helical membrane pass occupies residues 4 to 24; the sequence is LQLIFLLFFFPTLLFLYCLPY. Residue Cys-447 participates in heme binding.

It belongs to the cytochrome P450 family. It depends on heme as a cofactor.

It is found in the membrane. It carries out the reaction a flavanone + reduced [NADPH--hemoprotein reductase] + O2 = a flavone + oxidized [NADPH--hemoprotein reductase] + 2 H2O + H(+). Its pathway is secondary metabolite biosynthesis; flavonoid biosynthesis. Functionally, functions as a flavone synthase II (FNSII) that catalyzes the direct conversion of flavanones to flavones. In vitro, can convert liquiritigenin, naringenin and eriodictyol to 7,4'-dihydroxyflavone, apigenin and luteolin, respectively. This is Cytochrome P450 93B2 from Gerbera hybrida (Daisy).